The following is a 261-amino-acid chain: Malonyl-[acyl-carrier protein] O-methyltransferase (261 aa).

Belongs to the methyltransferase superfamily.

It catalyses the reaction malonyl-[ACP] + S-adenosyl-L-methionine = malonyl-[ACP] methyl ester + S-adenosyl-L-homocysteine. It participates in cofactor biosynthesis; biotin biosynthesis. In terms of biological role, converts the free carboxyl group of a malonyl-thioester to its methyl ester by transfer of a methyl group from S-adenosyl-L-methionine (SAM). It allows to synthesize pimeloyl-ACP via the fatty acid synthetic pathway. In Bacteroides thetaiotaomicron (strain ATCC 29148 / DSM 2079 / JCM 5827 / CCUG 10774 / NCTC 10582 / VPI-5482 / E50), this protein is Malonyl-[acyl-carrier protein] O-methyltransferase.